The chain runs to 267 residues: Transcription factor Spi-B (267 aa).

The tract at residues 1–31 (MLALEAAQLDGPHLSCLYPEGVFYDLDSCKP) is TAD1 (Acidic). The interval 41–62 (LDSTWGWTEAPPAPAIAPYEAF) is TAD2. The segment at residues 174 to 257 (LRLYQFLLGL…VKRKLTYQFD (84 aa)) is a DNA-binding region (ETS).

Belongs to the ETS family. As to quaternary structure, can form homotypic interactions. Interacts with IRF4/Pip. Interacts with JUN. Interacts with TBP. May also interact with CREBBP and EP300. Interacts with NONO/p54(nrb). Expressed in the medulla of the thymus, the spleen and germinal centers of the lymph nodes. Expressed in B-cells and T-cells, expression increases during B-cell maturation and decreases during T-cell maturation.

Its subcellular location is the nucleus. Its function is as follows. Sequence specific transcriptional activator which binds to the PU-box, a purine-rich DNA sequence (5'-GAGGAA-3') that can act as a lymphoid-specific enhancer. Promotes development of plasmacytoid dendritic cells (pDCs), also known as type 2 DC precursors (pre-DC2) or natural interferon (IFN)-producing cells. These cells have the capacity to produce large amounts of interferon and block viral replication. Required for B-cell receptor (BCR) signaling, which is necessary for normal B-cell development and antigenic stimulation. This Mus musculus (Mouse) protein is Transcription factor Spi-B (Spib).